A 189-amino-acid chain; its full sequence is Protein jagunal homolog (189 aa).

Over 1-34 the chain is Cytoplasmic; sequence MSSRGVRAAGTDGNDFQNRQRIAQHYQESAQYKS. The chain crosses the membrane as a helical span at residues 35-55; the sequence is VLKWFFVPHFLILVFMWLKVG. Residues 56–75 lie on the Lumenal side of the membrane; the sequence is SEFLRYNFGWKNAFFERLDM. Residues 76–96 traverse the membrane as a helical segment; that stretch reads PAAYPWEYVWCLSFIPIVLAL. Topologically, residues 97–105 are cytoplasmic; sequence SSFQRNKLK. The helical transmembrane segment at 106–126 threads the bilayer; the sequence is VLHYAYYAEFICGIFPCMIGL. The Lumenal segment spans residues 127-150; sequence GGQLPELLEYANDMEGSNTPTFKG. The helical transmembrane segment at 151-171 threads the bilayer; sequence IFPMVIIWYIFFAVALQIHGF. The Cytoplasmic segment spans residues 172-189; that stretch reads SMYFMHHLAAAWAPVKRD.

This sequence belongs to the jagunal family.

It is found in the endoplasmic reticulum membrane. In Caenorhabditis briggsae, this protein is Protein jagunal homolog.